The sequence spans 518 residues: GMP synthase [glutamine-hydrolyzing] (518 aa).

The region spanning threonine 8–asparagine 201 is the Glutamine amidotransferase type-1 domain. The Nucleophile role is filled by cysteine 85. Residues histidine 175 and glutamate 177 contribute to the active site. Positions tryptophan 202–arginine 393 constitute a GMPS ATP-PPase domain. Serine 229–serine 235 is a binding site for ATP.

In terms of assembly, homodimer.

The enzyme catalyses XMP + L-glutamine + ATP + H2O = GMP + L-glutamate + AMP + diphosphate + 2 H(+). It participates in purine metabolism; GMP biosynthesis; GMP from XMP (L-Gln route): step 1/1. Its function is as follows. Catalyzes the synthesis of GMP from XMP. The polypeptide is GMP synthase [glutamine-hydrolyzing] (Bartonella henselae (strain ATCC 49882 / DSM 28221 / CCUG 30454 / Houston 1) (Rochalimaea henselae)).